The sequence spans 684 residues: MSAQDFLVELGTEELPPKALASLGDAFLAGIEKGLQAAGLNYTGKQVYAAPRRLAVLIRQLDVQQPDRSINIDGPPLQAAFNAEGEPTQAALGFAKKCGVELAEIDQSGPKLRFSQHIPGKATVGLLPTIVEDSLNDLPIPKRMRWAASREEFVRPTQWLVMLLGDQVVDCTILSQKAGRESRGHRFHHPENVLITTPANYVEDLRKAYVLADFAERRELISKRTAELAMQQEGTAIVPPALLDEVTALVEWPVPLVCSFEERFLEVPQEALITTMQDNQKYFCLLDSEGKLLPRFITVANVESRDPKQIVQGNEKVVRPRLTDAEFFFKQDKKQPLETFNERLKNVVFQAQLGTVYDKAERVSRLAAFIAPLIGGDAQRAGRAGLLSKCDLATEMVGEFPEMQGVAGYYYALNDGEPEDVALALNEQYMPRGAGAELPQTLTGAAVAIADKLDTLVGIFGIGMLPTGSKDPYALRRAALGVLRILIEKQLDLDLTGAVEFAVKQFGAKIKAPGLAEQVLEFIFDRLRARYEDEGIDVATYLSVRALQPGSALDFDQRVQAVQAFRKLPEAEALAAVNKRVSNLLSKAEGAIAEQVEPKYFDNANEFSLYSAIQQADQAVQPMAAARQYSESLARLAALRDPVDAFFEAVMVNAEDAKVRANRYALLSRLRGLFLGVADISLLG.

Belongs to the class-II aminoacyl-tRNA synthetase family. Tetramer of two alpha and two beta subunits.

Its subcellular location is the cytoplasm. The catalysed reaction is tRNA(Gly) + glycine + ATP = glycyl-tRNA(Gly) + AMP + diphosphate. The protein is Glycine--tRNA ligase beta subunit of Pseudomonas putida (strain ATCC 47054 / DSM 6125 / CFBP 8728 / NCIMB 11950 / KT2440).